Here is a 487-residue protein sequence, read N- to C-terminus: Sodium-coupled neutral amino acid symporter 1 (487 aa).

Topologically, residues 1-74 (MMHFKSGLEL…EYIPGTTSLG (74 aa)) are cytoplasmic. Phosphoserine is present on S6. The residue at position 11 (T11) is a Phosphothreonine. S25, S28, S49, and S52 each carry phosphoserine. Position 54 is a phosphothreonine (T54). Position 56 is a phosphoserine (S56). The chain crosses the membrane as a helical span at residues 75 to 97 (MSVFNLSNAIMGSGILGLAFALA). Topologically, residues 98 to 112 (NTGILLFLVLLTSVT) are extracellular. Residues 113 to 133 (LLSIYSINLLLICSKETGCMV) form a helical membrane-spanning segment. Over 134 to 147 (YEKLGEQVFGTTGK) the chain is Cytoplasmic. A helical transmembrane segment spans residues 148-168 (FVIFGATSLQNTGAMLSYLFI). Over 169–188 (VKNELPSAIKFLMGKEETFS) the chain is Extracellular. A helical membrane pass occupies residues 189 to 211 (AWYVDGRVLVVIVTFGIILPLCL). Over 212-216 (LKNLG) the chain is Cytoplasmic. A helical membrane pass occupies residues 217-237 (YLGYTSGFSLSCMVFFLIVVI). The Extracellular portion of the chain corresponds to 238–275 (YKKFQIPCIVPELNSTISANSTNADTCTPKYVTLNSKT). Cysteines 245 and 264 form a disulfide. 2 N-linked (GlcNAc...) asparagine glycosylation sites follow: N251 and N257. Residues 276-296 (VYALPTIAFAFVCHPSVLPIY) form a helical membrane-spanning segment. Residues 297–312 (SELKDRSQKKMQMVSN) are Cytoplasmic-facing. The chain crosses the membrane as a helical span at residues 313–333 (ISFFAMFVMYFLTAIFGYLTF). Residues 334–350 (YDNVQSDLLHKYQGKDD) are Extracellular-facing. Residues 351 to 371 (ILILTVRLAVIVAVILTVPVL) form a helical membrane-spanning segment. The Cytoplasmic segment spans residues 372–393 (FFTVRSSLFELAKKTKFNLCRH). Residues 394 to 414 (TVVTCILLVVINLLVISIPSM) traverse the membrane as a helical segment. Topologically, residues 415–416 (KD) are extracellular. Residues 417–437 (IFGVVGVTSANMLIFILPSSL) form a helical membrane-spanning segment. Residues 438–452 (YLKITDQDGDKGTQR) are Cytoplasmic-facing. A helical transmembrane segment spans residues 453–473 (IWAALFLGLGVLFSLVSIPLV). Residues 474–487 (IYDWACSSSSDEGH) are Extracellular-facing.

The protein belongs to the amino acid/polyamine transporter 2 family. Post-translationally, N-glycosylation plays an important role in the L-glutamine transport.

It localises to the cell membrane. It catalyses the reaction L-glutamine(in) + Na(+)(in) = L-glutamine(out) + Na(+)(out). The enzyme catalyses L-alanine(in) + Na(+)(in) = L-alanine(out) + Na(+)(out). The catalysed reaction is L-asparagine(in) + Na(+)(in) = L-asparagine(out) + Na(+)(out). It carries out the reaction L-histidine(in) + Na(+)(in) = L-histidine(out) + Na(+)(out). It catalyses the reaction L-serine(in) + Na(+)(in) = L-serine(out) + Na(+)(out). The enzyme catalyses L-cysteine(in) + Na(+)(in) = L-cysteine(out) + Na(+)(out). The catalysed reaction is L-methionine(in) + Na(+)(in) = L-methionine(out) + Na(+)(out). It carries out the reaction glycine(in) + Na(+)(in) = glycine(out) + Na(+)(out). It catalyses the reaction L-threonine(in) + Na(+)(in) = L-threonine(out) + Na(+)(out). The enzyme catalyses L-proline(in) + Na(+)(in) = L-proline(out) + Na(+)(out). With respect to regulation, inhibited by alpha-(methylamino)isobutyric acid (MeAIB). Inhibited by lithium, potassium, choline ions, N-methylglucamine. The pH dependence has an allosteric effect on the transport. Functionally, symporter that cotransports short-chain neutral amino acids and sodium ions from the extraccellular to the intracellular side of the cell membrane. The transport is elctrogenic, pH dependent and driven by the Na(+) electrochemical gradient. Participates in the astroglia-derived glutamine transport into GABAergic interneurons for neurotransmitter GABA de novo synthesis. May also contributes to amino acid transport in placental trophoblast. Regulates synaptic plasticity. In Pongo abelii (Sumatran orangutan), this protein is Sodium-coupled neutral amino acid symporter 1.